The following is a 79-amino-acid chain: UPF0175 protein APE_0890a.1 (79 aa).

This sequence belongs to the UPF0175 family.

The protein is UPF0175 protein APE_0890a.1 of Aeropyrum pernix (strain ATCC 700893 / DSM 11879 / JCM 9820 / NBRC 100138 / K1).